The sequence spans 447 residues: GTPase Der (447 aa).

2 consecutive EngA-type G domains span residues 3–167 and 181–354; these read PVIA…VQER and VKIA…AAAM. GTP is bound by residues 9–16, 56–60, 119–122, 187–194, 234–238, and 299–302; these read GRPNVGKS, DTGGF, NKAE, DTAGL, and NKWD. The 85-residue stretch at 355–439 folds into the KH-like domain; that stretch reads VKLPTPQLTR…PLRIEFRTNK (85 aa).

The protein belongs to the TRAFAC class TrmE-Era-EngA-EngB-Septin-like GTPase superfamily. EngA (Der) GTPase family. Associates with the 50S ribosomal subunit.

In terms of biological role, GTPase that plays an essential role in the late steps of ribosome biogenesis. The chain is GTPase Der from Cupriavidus pinatubonensis (strain JMP 134 / LMG 1197) (Cupriavidus necator (strain JMP 134)).